Consider the following 297-residue polypeptide: MSSAHFNRGPAYGLSAEVKNKLAQKYDHQREQELREWIEGVTGRRIGNNFMDGLKDGIILCEFINKLQPGSVKKINESTQNWHQLENIGNFIKAITKYGVKPHDIFEANDLFENTNHTQVQSTLLALASMAKTKGNKVNVGVKYAEKQERKFEPGKLREGRNIIGLQMGTNKFASQQGMTAYGTRRHLYDPKLGTDQPLDQATISLQMGTNKGASQAGMTAPGTKRQIFEPGLGMEHCDTLNVSLQMGSNKGASQRGMTVYGLPRQVYDPKYCLTPEYPELGEPAHNHHAHNYYNSA.

One can recognise a Calponin-homology (CH) domain in the interval H28–A131. Calponin-like repeat units lie at residues I164–Y189, I204–F229, and V243–Y268. Phosphothreonine; by ROCK2 is present on T170. The residue at position 175 (S175) is a Phosphoserine; by ROCK2. Residues T180 and T184 each carry the phosphothreonine; by ROCK2 modification. T259 carries the phosphothreonine; by ROCK2 modification.

This sequence belongs to the calponin family. As to quaternary structure, part of cGMP kinase signaling complex at least composed of ACTA2/alpha-actin, CNN1/calponin H1, PLN/phospholamban, PRKG1 and ITPR1. As to expression, smooth muscle, and tissues containing significant amounts of smooth muscle.

In terms of biological role, thin filament-associated protein that is implicated in the regulation and modulation of smooth muscle contraction. It is capable of binding to actin, calmodulin and tropomyosin. The interaction of calponin with actin inhibits the actomyosin Mg-ATPase activity. In Homo sapiens (Human), this protein is Calponin-1 (CNN1).